The sequence spans 792 residues: E3 UFM1-protein ligase 1 (792 aa).

The residue at position 2 (Ala2) is an N-acetylalanine. Positions 2-200 are mediates interaction with DDRGK1; it reads ADAWEEIRRL…RGLFSAITRP (199 aa). A required for E3 UFM1-protein ligase activity region spans residues 2–212; it reads ADAWEEIRRL…VNSLISRYGF (211 aa). Positions 121 to 250 are involved in CDK5RAP3-binding; it reads DRLAEEVNDK…KAVFIPDIYS (130 aa). Residues 200–400 form a mediates interaction with TRIP4 region; that stretch reads PTAVNSLISR…NPVHLITEED (201 aa). The tract at residues 412–471 is disordered; that stretch reads TSKKDKKDERRRKATEGSGSVRGGGGSNAREYKIKKTKKKGRKDDDSDDESSHTGKKKPE. Arg433 is subject to Omega-N-methylarginine. A compositionally biased stretch (basic and acidic residues) spans 453–471; that stretch reads RKDDDSDDESSHTGKKKPE. Ser458 bears the Phosphoserine mark. Positions 488-682 are mediates interaction with CDK5RAP3; the sequence is LQDAPEEFIS…QLKVTEDPAL (195 aa). Thr534 is subject to Phosphothreonine. Ser752 carries the phosphoserine modification.

This sequence belongs to the UFL1 family. In terms of assembly, catalytic component of the UFM1 ribosome E3 ligase (UREL) complex, composed of UFL1, DDRGK1 and CDK5RAP3. Interacts with E2-like enzyme UFC1. Interacts with RELA. Interacts with NBN; promoting recruitment to double-strand breaks following DNA damage. Interacts (when phosphorylated) with YWHAG/14-3-3-gamma; sequestering UFL1 and preventing its association with PDCD1/PD-1 substrate. Post-translationally, ubiquitinated, leading to its degradation by the proteasome. Interaction with CDK5RAP3 protects both proteins against ubiquitination and degradation via the proteasome. Phosphorylation at Thr-534 by AMPK promotes its interaction with YWHAG/14-3-3-gamma, thereby preventing UFL1 association with PDCD1/PD-1 substrate.

It localises to the endoplasmic reticulum membrane. The protein localises to the cytoplasm. Its subcellular location is the cytosol. The protein resides in the nucleus. It is found in the chromosome. In terms of biological role, E3 protein ligase that mediates ufmylation, the covalent attachment of the ubiquitin-like modifier UFM1 to lysine residues on target proteins, and which plays a key role in various processes, such as ribosome recycling, response to DNA damage, interferon response or reticulophagy (also called ER-phagy). Catalyzes ufmylation of many protein, such as CD274/PD-L1, CDK5RAP3, CYB5R3, DDRGK1, EIF6, histone H4, MRE11, P4HB, PDCD1/PD-1, TRIP4, RPN1, RPS20/uS10, RPL10/uL16, RPL26/uL24, SYVN1/HRD1 and TP53/p53. As part of the UREL complex, plays a key role in ribosome recycling by catalyzing mono-ufmylation of RPL26/uL24 subunit of the 60S ribosome. Ufmylation of RPL26/uL24 occurs on free 60S ribosomes following ribosome dissociation: it weakens the junction between post-termination 60S subunits and SEC61 translocons, promoting release and recycling of the large ribosomal subunit from the endoplasmic reticulum membrane. Ufmylation of RPL26/uL24 and subsequent 60S ribosome recycling either take place after normal termination of translation or after ribosome stalling during cotranslational translocation at the endoplasmic reticulum. Involved in reticulophagy in response to endoplasmic reticulum stress by mediating ufmylation of proteins such as CYB5R3 and RPN1, thereby promoting lysosomal degradation of ufmylated proteins. Ufmylation in response to endoplasmic reticulum stress is essential for processes such as hematopoiesis, blood vessel morphogenesis or inflammatory response. Regulates inflammation in response to endoplasmic reticulum stress by promoting reticulophagy, leading to inhibit the activity of the NF-kappa-B transcription factor. Mediates ufmylation of DDRGK1 and CDK5RAP3; the role of these modifications is however unclear: as both DDRGK1 and CDK5RAP3 act as substrate adapters for ufmylation, it is uncertain whether ufmylation of these proteins is, a collateral effect or is required for ufmylation. Acts as a negative regulator of T-cell activation by mediating ufmylation and stabilization of PDCD1/PD-1. Also involved in the response to DNA damage: recruited to double-strand break sites following DNA damage and mediates monoufmylation of histone H4 and ufmylation of MRE11. Mediates ufmylation of TP53/p53, promoting its stability. Catalyzes ufmylation of TRIP4, thereby playing a role in nuclear receptor-mediated transcription. Required for hematopoietic stem cell function and hematopoiesis. The chain is E3 UFM1-protein ligase 1 from Bos taurus (Bovine).